Here is a 335-residue protein sequence, read N- to C-terminus: UDP-3-O-acylglucosamine N-acyltransferase (335 aa).

The Proton acceptor role is filled by H225.

Belongs to the transferase hexapeptide repeat family. LpxD subfamily. Homotrimer.

It carries out the reaction a UDP-3-O-[(3R)-3-hydroxyacyl]-alpha-D-glucosamine + a (3R)-hydroxyacyl-[ACP] = a UDP-2-N,3-O-bis[(3R)-3-hydroxyacyl]-alpha-D-glucosamine + holo-[ACP] + H(+). The protein operates within bacterial outer membrane biogenesis; LPS lipid A biosynthesis. Functionally, catalyzes the N-acylation of UDP-3-O-acylglucosamine using 3-hydroxyacyl-ACP as the acyl donor. Is involved in the biosynthesis of lipid A, a phosphorylated glycolipid that anchors the lipopolysaccharide to the outer membrane of the cell. The protein is UDP-3-O-acylglucosamine N-acyltransferase of Delftia acidovorans (strain DSM 14801 / SPH-1).